Consider the following 125-residue polypeptide: UPF0738 protein GK0828 (125 aa).

It belongs to the UPF0738 family.

In Geobacillus kaustophilus (strain HTA426), this protein is UPF0738 protein GK0828.